Reading from the N-terminus, the 187-residue chain is Peptidyl-tRNA hydrolase (187 aa).

His14 is a binding site for tRNA. Residue His19 is the Proton acceptor of the active site. Tyr62, Asn64, and Asn110 together coordinate tRNA.

Belongs to the PTH family. Monomer.

It localises to the cytoplasm. The enzyme catalyses an N-acyl-L-alpha-aminoacyl-tRNA + H2O = an N-acyl-L-amino acid + a tRNA + H(+). Hydrolyzes ribosome-free peptidyl-tRNAs (with 1 or more amino acids incorporated), which drop off the ribosome during protein synthesis, or as a result of ribosome stalling. In terms of biological role, catalyzes the release of premature peptidyl moieties from peptidyl-tRNA molecules trapped in stalled 50S ribosomal subunits, and thus maintains levels of free tRNAs and 50S ribosomes. This chain is Peptidyl-tRNA hydrolase, found in Chlorobaculum tepidum (strain ATCC 49652 / DSM 12025 / NBRC 103806 / TLS) (Chlorobium tepidum).